Reading from the N-terminus, the 275-residue chain is 2,3,4,5-tetrahydropyridine-2,6-dicarboxylate N-succinyltransferase (275 aa).

This sequence belongs to the transferase hexapeptide repeat family.

The protein localises to the cytoplasm. It catalyses the reaction (S)-2,3,4,5-tetrahydrodipicolinate + succinyl-CoA + H2O = (S)-2-succinylamino-6-oxoheptanedioate + CoA. The protein operates within amino-acid biosynthesis; L-lysine biosynthesis via DAP pathway; LL-2,6-diaminopimelate from (S)-tetrahydrodipicolinate (succinylase route): step 1/3. This is 2,3,4,5-tetrahydropyridine-2,6-dicarboxylate N-succinyltransferase from Ralstonia pickettii (strain 12J).